The following is a 240-amino-acid chain: MRTLFIGDLHLSADRLDITQAFTRFLDTELDDADALYILGDLFEVWVGDDIALPFALELAEKLKQVSQKLPVYFIHGNRDFMLGKQFARAAGMQILPEVTCLNLYGVETVILHGDSLCTLDKAYQRFRKLRSLSLARWLYGCLSKKTRQGIADKIRSNSKSSNQQKSYTIMDVEPNAVDALFAKTHTKHMIHGHTHRPAIHLLANDCQRIVVGDWYEQGSVLSVSAEGINLQSLPFEHTT.

Mn(2+) is bound by residues Asp-8, His-10, Asp-41, Asn-78, and His-113. 78–79 contributes to the substrate binding site; that stretch reads NR. Residues Asp-121, Ser-159, Asn-163, Lys-166, and His-194 each contribute to the substrate site. His-194 and His-196 together coordinate Mn(2+).

Belongs to the LpxH family. Requires Mn(2+) as cofactor.

The protein resides in the cell inner membrane. It catalyses the reaction UDP-2-N,3-O-bis[(3R)-3-hydroxytetradecanoyl]-alpha-D-glucosamine + H2O = 2-N,3-O-bis[(3R)-3-hydroxytetradecanoyl]-alpha-D-glucosaminyl 1-phosphate + UMP + 2 H(+). The protein operates within glycolipid biosynthesis; lipid IV(A) biosynthesis; lipid IV(A) from (3R)-3-hydroxytetradecanoyl-[acyl-carrier-protein] and UDP-N-acetyl-alpha-D-glucosamine: step 4/6. Its function is as follows. Hydrolyzes the pyrophosphate bond of UDP-2,3-diacylglucosamine to yield 2,3-diacylglucosamine 1-phosphate (lipid X) and UMP by catalyzing the attack of water at the alpha-P atom. Involved in the biosynthesis of lipid A, a phosphorylated glycolipid that anchors the lipopolysaccharide to the outer membrane of the cell. This chain is UDP-2,3-diacylglucosamine hydrolase, found in Shewanella baltica (strain OS185).